Here is a 100-residue protein sequence, read N- to C-terminus: Pancreatic trypsin inhibitor (100 aa).

The signal sequence occupies residues 1–21; the sequence is MKMSRLCLSVALLVLLGTLAA. A propeptide spanning residues 22-35 is cleaved from the precursor; that stretch reads STPGCDTSNQAKAQ. Positions 40 to 90 constitute a BPTI/Kunitz inhibitor domain; the sequence is CLEPPYTGPCKARIIRYFYNAKAGLCQTFVYGGCRAKRNNFKSAEDCMRTC. 3 cysteine pairs are disulfide-bonded: C40–C90, C49–C73, and C65–C86. Positions 94–100 are excised as a propeptide; the sequence is IGPWENL.

It is found in the secreted. Functionally, inhibits trypsin, kallikrein, chymotrypsin, and plasmin. This Bos taurus (Bovine) protein is Pancreatic trypsin inhibitor.